We begin with the raw amino-acid sequence, 250 residues long: Bis(5'-nucleosyl)-tetraphosphatase PrpE [asymmetrical] (250 aa).

The protein belongs to the PrpE family. Ni(2+) serves as cofactor.

It carries out the reaction P(1),P(4)-bis(5'-guanosyl) tetraphosphate + H2O = GMP + GTP + 2 H(+). Functionally, asymmetrically hydrolyzes Ap4p to yield AMP and ATP. This is Bis(5'-nucleosyl)-tetraphosphatase PrpE [asymmetrical] from Oceanobacillus iheyensis (strain DSM 14371 / CIP 107618 / JCM 11309 / KCTC 3954 / HTE831).